A 174-amino-acid polypeptide reads, in one-letter code: CASP-like protein 4D2 (174 aa).

Over 1–14 (MAPPPPSPPPVSLK) the chain is Cytoplasmic. A helical membrane pass occupies residues 15-35 (VSLLLLRVLTGVFLVIALIIL). At 36–60 (STNSVTIVSQGSALKFHFKDVYAYR) the chain is on the extracellular side. Residues 61-81 (YMLSAAVIGLLYAVIQLFFTI) traverse the membrane as a helical segment. The Cytoplasmic segment spans residues 82–150 (SEFATGMKNP…FFSRGYASAS (69 aa)). The helical transmembrane segment at 151–171 (LLLFSFICLAVLSVFSSLAIA) threads the bilayer. Over 172 to 174 (KRN) the chain is Extracellular.

The protein belongs to the Casparian strip membrane proteins (CASP) family. Homodimer and heterodimers.

The protein localises to the cell membrane. The protein is CASP-like protein 4D2 of Arabidopsis lyrata subsp. lyrata (Lyre-leaved rock-cress).